The primary structure comprises 258 residues: Phosphonates import ATP-binding protein PhnC 3 (258 aa).

One can recognise an ABC transporter domain in the interval 2–246 (IEFKNVSLVY…TFEEIYGRKI (245 aa)). 35 to 42 (GLSGAGKS) provides a ligand contact to ATP.

The protein belongs to the ABC transporter superfamily. Phosphonates importer (TC 3.A.1.9.1) family. In terms of assembly, the complex is composed of two ATP-binding proteins (PhnC), two transmembrane proteins (PhnE) and a solute-binding protein (PhnD).

It localises to the cell membrane. The catalysed reaction is phosphonate(out) + ATP + H2O = phosphonate(in) + ADP + phosphate + H(+). Functionally, part of the ABC transporter complex PhnCDE involved in phosphonates import. Responsible for energy coupling to the transport system. The polypeptide is Phosphonates import ATP-binding protein PhnC 3 (Halalkalibacterium halodurans (strain ATCC BAA-125 / DSM 18197 / FERM 7344 / JCM 9153 / C-125) (Bacillus halodurans)).